The chain runs to 143 residues: Large ribosomal subunit protein bL17 (143 aa).

It belongs to the bacterial ribosomal protein bL17 family. In terms of assembly, part of the 50S ribosomal subunit. Contacts protein L32.

This is Large ribosomal subunit protein bL17 from Chelativorans sp. (strain BNC1).